A 359-amino-acid polypeptide reads, in one-letter code: MMKQIQVDLGERSYPIYIGQNLMNDSEALSRYLLKKRILIVTNETVAPLYLNQIQEVMVSFGEVESVILPDGEQFKDLAHLDAIFTALLQRNYGRDSVLVALGGGVIGDMTGFAAACYQRGIDFIQIPTTLLSQVDSSVGGKTAVNHPLGKNMIGAFYQPQLVLIDTQCLHTLPAREFAAGMAEVIKYGIMWDGKFFQWLENNVQALKRLETEALVYAISRCCEIKADVVSQDETEQGVRALLNLGHTFGHAIEAEMGYGNWLHGEAVAAGTVLAAQTARSLGLIDESIVCRIVQLLQAFDLPVSAPESMDFDSFIQHMRRDKKVLGGQIRLVLPTGIGQADVFSQVTESTLEQVICCA.

NAD(+)-binding positions include 71-76, 105-109, 129-130, K142, K151, and 169-172; these read DGEQFK, GVIGD, TT, and CLHT. 3 residues coordinate Zn(2+): E184, H247, and H264.

The protein belongs to the sugar phosphate cyclases superfamily. Dehydroquinate synthase family. The cofactor is Co(2+). Zn(2+) serves as cofactor. It depends on NAD(+) as a cofactor.

It is found in the cytoplasm. The catalysed reaction is 7-phospho-2-dehydro-3-deoxy-D-arabino-heptonate = 3-dehydroquinate + phosphate. The protein operates within metabolic intermediate biosynthesis; chorismate biosynthesis; chorismate from D-erythrose 4-phosphate and phosphoenolpyruvate: step 2/7. Functionally, catalyzes the conversion of 3-deoxy-D-arabino-heptulosonate 7-phosphate (DAHP) to dehydroquinate (DHQ). The protein is 3-dehydroquinate synthase of Shewanella sp. (strain W3-18-1).